Reading from the N-terminus, the 482-residue chain is Islet cell autoantigen 1-like protein (482 aa).

The AH domain occupies 44 to 247 (ASDAELDAKL…TARMMSQIHE (204 aa)). Disordered regions lie at residues 365 to 393 (TQECQTAFGSPSASLTSQEPSMGSEPLAH) and 427 to 449 (SHTDNQPVPSQSPKKLTRSPNNG). 2 stretches are compositionally biased toward polar residues: residues 366-385 (QECQTAFGSPSASLTSQEPS) and 428-449 (HTDNQPVPSQSPKKLTRSPNNG).

In Homo sapiens (Human), this protein is Islet cell autoantigen 1-like protein (ICA1L).